The following is a 186-amino-acid chain: dCTP deaminase (186 aa).

Residue 107-112 (KSTYAR) coordinates dCTP. Residue Glu133 is the Proton donor/acceptor of the active site. 3 residues coordinate dCTP: Gln152, Tyr166, and Gln176.

This sequence belongs to the dCTP deaminase family. Homotrimer.

The catalysed reaction is dCTP + H2O + H(+) = dUTP + NH4(+). It participates in pyrimidine metabolism; dUMP biosynthesis; dUMP from dCTP (dUTP route): step 1/2. Catalyzes the deamination of dCTP to dUTP. This is dCTP deaminase from Campylobacter jejuni subsp. doylei (strain ATCC BAA-1458 / RM4099 / 269.97).